We begin with the raw amino-acid sequence, 262 residues long: MTLQARNLTLARGGAPILTDVSLTLAPGTLVGLLGANGAGKSTLLAALAGELAPRSGQVYLGDADLATLNARQLARRRAVLPQKPSLSFDLGVSDVVGMGAYPFPELDPAAVRQLVRDALEQASVTHLAQRRYPQLSGGEQQRVQFARVLAQCHAMHAPGQTRYLMLDEPISNLDPRHQMELLATARALAHEAGMGVLVIVHDINQAARWCDTLALLADGRLAALGPPADVLTPDHMRRVYGIEADVLAHPTLPGRLLVLAR.

The ABC transporter domain maps to 3 to 244 (LQARNLTLAR…DHMRRVYGIE (242 aa)). Residue 35-42 (GANGAGKS) participates in ATP binding.

This sequence belongs to the ABC transporter superfamily. Heme (hemin) importer (TC 3.A.1.14.5) family. As to quaternary structure, the complex is composed of two ATP-binding proteins (HmuV), two transmembrane proteins (HmuU) and a solute-binding protein (HmuT).

Its subcellular location is the cell inner membrane. Part of the ABC transporter complex HmuTUV involved in hemin import. Responsible for energy coupling to the transport system. This is Hemin import ATP-binding protein HmuV from Bordetella parapertussis (strain 12822 / ATCC BAA-587 / NCTC 13253).